We begin with the raw amino-acid sequence, 205 residues long: Thymidine kinase (205 aa).

Residues 9-16 (SAMNAGKS) and 87-90 (DECQ) each bind ATP. The active-site Proton acceptor is the glutamate 88. Residues cysteine 145, cysteine 147, cysteine 182, and histidine 185 each coordinate Zn(2+).

It belongs to the thymidine kinase family. As to quaternary structure, homotetramer.

The protein localises to the cytoplasm. The catalysed reaction is thymidine + ATP = dTMP + ADP + H(+). Its activity is regulated as follows. Allosteric enzyme which is feedback inhibited by dTTP and activated by a number of dNDP and dNTP. Its function is as follows. Phosphorylates both thymidine and deoxyuridine. The chain is Thymidine kinase from Escherichia coli (strain K12).